Reading from the N-terminus, the 101-residue chain is Small ribosomal subunit protein uS14 (101 aa).

Belongs to the universal ribosomal protein uS14 family. Part of the 30S ribosomal subunit. Contacts proteins S3 and S10.

Binds 16S rRNA, required for the assembly of 30S particles and may also be responsible for determining the conformation of the 16S rRNA at the A site. The protein is Small ribosomal subunit protein uS14 of Acinetobacter baumannii (strain AB307-0294).